The chain runs to 408 residues: Substance-P receptor (408 aa).

At 1-32 (MNSNISAQNDSALNSTIQNGTKINQFIQPPWQ) the chain is on the extracellular side. Residues Asn4, Asn9, Asn14, and Asn19 are each glycosylated (N-linked (GlcNAc...) asparagine). A helical transmembrane segment spans residues 33-55 (IALWSVAYSIIVIVSLVGNIIVM). At 56-65 (WIIIAHKRMR) the chain is on the cytoplasmic side. Residues 66-87 (TVTNYFLVNLAFAEASMSAFNT) traverse the membrane as a helical segment. Residues 88-107 (VINFTYAIHNHWYYGLIYCK) lie on the Extracellular side of the membrane. Cys106 and Cys181 are disulfide-bonded. A helical membrane pass occupies residues 108–129 (FHNFFPISAVFTSIYSMTAIAL). Residues 130–149 (DRYMAIIHPLKPRLSATATK) are Cytoplasmic-facing. The chain crosses the membrane as a helical span at residues 150-170 (IVICVIWSFSFCMAFPLGYYA). Residues 171-196 (DVYPMEGGDICYLNWPDSEENRKYEQ) lie on the Extracellular side of the membrane. A helical transmembrane segment spans residues 197 to 221 (VYQVLVFCLIYILPLLVIGCAYTFI). Residues 222–250 (GMTLWASEIPGDSSDRYHEQVVAKRKVVK) lie on the Cytoplasmic side of the membrane. Residues 251–272 (MMIVVVCTFAICWLPFHIFFLL) traverse the membrane as a helical segment. Residues 273-283 (QTLHEMTQKFY) lie on the Extracellular side of the membrane. A helical transmembrane segment spans residues 284-308 (QQFYLAIMWLAMSSTMYNPIIYCCL). Topologically, residues 309–408 (NDRFRIGFKH…SSSFYSNNLA (100 aa)) are cytoplasmic. Cys323 carries S-palmitoyl cysteine lipidation. The disordered stretch occupies residues 366-408 (DEEAEENGKSSKRLSLDLTSNGSSRSVCKTMSDSSSFYSNNLA). A compositionally biased stretch (polar residues) spans 382 to 408 (DLTSNGSSRSVCKTMSDSSSFYSNNLA).

The protein belongs to the G-protein coupled receptor 1 family.

Its subcellular location is the cell membrane. Functionally, this is a receptor for the tachykinin neuropeptide substance P. It is probably associated with G proteins that activate a phosphatidylinositol-calcium second messenger system. This chain is Substance-P receptor (TACR1), found in Aquarana catesbeiana (American bullfrog).